We begin with the raw amino-acid sequence, 184 residues long: ATP synthase subunit b, chloroplastic (184 aa).

Residues 27-49 form a helical membrane-spanning segment; it reads LATNPINLSVVLGVLIFFGKGVL.

It belongs to the ATPase B chain family. As to quaternary structure, F-type ATPases have 2 components, F(1) - the catalytic core - and F(0) - the membrane proton channel. F(1) has five subunits: alpha(3), beta(3), gamma(1), delta(1), epsilon(1). F(0) has four main subunits: a(1), b(1), b'(1) and c(10-14). The alpha and beta chains form an alternating ring which encloses part of the gamma chain. F(1) is attached to F(0) by a central stalk formed by the gamma and epsilon chains, while a peripheral stalk is formed by the delta, b and b' chains.

It is found in the plastid. The protein resides in the chloroplast thylakoid membrane. F(1)F(0) ATP synthase produces ATP from ADP in the presence of a proton or sodium gradient. F-type ATPases consist of two structural domains, F(1) containing the extramembraneous catalytic core and F(0) containing the membrane proton channel, linked together by a central stalk and a peripheral stalk. During catalysis, ATP synthesis in the catalytic domain of F(1) is coupled via a rotary mechanism of the central stalk subunits to proton translocation. Functionally, component of the F(0) channel, it forms part of the peripheral stalk, linking F(1) to F(0). The polypeptide is ATP synthase subunit b, chloroplastic (Morus indica (Mulberry)).